Reading from the N-terminus, the 131-residue chain is Large ribosomal subunit protein bL17 (131 aa).

Belongs to the bacterial ribosomal protein bL17 family. As to quaternary structure, part of the 50S ribosomal subunit. Contacts protein L32.

The polypeptide is Large ribosomal subunit protein bL17 (Shewanella sp. (strain ANA-3)).